Consider the following 213-residue polypeptide: MNLLIMGPPGAGKGTQAEVLVKELKITHISTGDMFRAAIKEGTEMGKKAKEYMDKGALVPDEVVIGMVKDRLSQADCKEGFLLDGFPRTVEQASALDATLQDLGIKLDAVINIEVPLEKLMARLTGRRVCKNCGASYHVIFNPPQAEGKCNSCNGELYQRSDDNEESVGTRLNAYIEKTKPLIDYYEAKGILKNINGDQEISAVLNDILVAVK.

10–15 (GAGKGT) provides a ligand contact to ATP. The interval 30 to 59 (STGDMFRAAIKEGTEMGKKAKEYMDKGALV) is NMP. Residues threonine 31, arginine 36, 57-59 (ALV), 85-88 (GFPR), and glutamine 92 contribute to the AMP site. An LID region spans residues 126 to 163 (GRRVCKNCGASYHVIFNPPQAEGKCNSCNGELYQRSDD). Arginine 127 is a binding site for ATP. The Zn(2+) site is built by cysteine 130 and cysteine 133. ATP is bound at residue 136–137 (SY). Zn(2+) is bound by residues cysteine 150 and cysteine 153. Arginine 160 and arginine 171 together coordinate AMP. Residue glutamine 199 participates in ATP binding.

The protein belongs to the adenylate kinase family. In terms of assembly, monomer.

The protein resides in the cytoplasm. It catalyses the reaction AMP + ATP = 2 ADP. It functions in the pathway purine metabolism; AMP biosynthesis via salvage pathway; AMP from ADP: step 1/1. In terms of biological role, catalyzes the reversible transfer of the terminal phosphate group between ATP and AMP. Plays an important role in cellular energy homeostasis and in adenine nucleotide metabolism. This Desulforamulus reducens (strain ATCC BAA-1160 / DSM 100696 / MI-1) (Desulfotomaculum reducens) protein is Adenylate kinase.